The following is a 368-amino-acid chain: MNILFAGGGTGGHLYPAVAMAEEVQRMVPGASVLFAGTSRGIEAREVPRLGYRLHLLEVRGLRRGRSLKDMAANIGIAADFAAALASAVALVRRERPDVVVGTGGFVSAPVLFAAQLLGKKTLIQEQNAFPGVTTRLLSALATEVHLSFAEAARYLPKQKGVMVSGNPARSFTQVDASAAREHFGLDPSRPTLLVFGGSRGARSINNAVLRHHDLFCAAANLLWQTGSVDFERIRDACPPSRHLQIVPYIEEMGVAYSASDLVLCRAGASSIAELTNLAKPSVLVPYPYATGDHQRHNARALVHSGAAEVIEDSVLDSEESAAAIMELLHDGARRSAMSEAAGRLGAPDAARHLALRIISLAGTKQGS.

UDP-N-acetyl-alpha-D-glucosamine-binding positions include 10-12 (TGG), Asn-128, Arg-170, Ser-199, Ile-250, and Gln-295.

The protein belongs to the glycosyltransferase 28 family. MurG subfamily.

The protein localises to the cell inner membrane. It carries out the reaction di-trans,octa-cis-undecaprenyl diphospho-N-acetyl-alpha-D-muramoyl-L-alanyl-D-glutamyl-meso-2,6-diaminopimeloyl-D-alanyl-D-alanine + UDP-N-acetyl-alpha-D-glucosamine = di-trans,octa-cis-undecaprenyl diphospho-[N-acetyl-alpha-D-glucosaminyl-(1-&gt;4)]-N-acetyl-alpha-D-muramoyl-L-alanyl-D-glutamyl-meso-2,6-diaminopimeloyl-D-alanyl-D-alanine + UDP + H(+). The protein operates within cell wall biogenesis; peptidoglycan biosynthesis. Cell wall formation. Catalyzes the transfer of a GlcNAc subunit on undecaprenyl-pyrophosphoryl-MurNAc-pentapeptide (lipid intermediate I) to form undecaprenyl-pyrophosphoryl-MurNAc-(pentapeptide)GlcNAc (lipid intermediate II). The sequence is that of UDP-N-acetylglucosamine--N-acetylmuramyl-(pentapeptide) pyrophosphoryl-undecaprenol N-acetylglucosamine transferase from Chlorobium phaeovibrioides (strain DSM 265 / 1930) (Prosthecochloris vibrioformis (strain DSM 265)).